A 231-amino-acid polypeptide reads, in one-letter code: NADH-ubiquinone oxidoreductase chain 4 (231 aa).

6 helical membrane passes run 1-21 (PIAGSMVLAAILLKLGGYGII), 34-54 (LFLPFIVLALWGAILANLTCL), 61-80 (SLIAYSSISHMGLVVAAIII), 84-106 (WGLSGAMALMIAHGFTSSALFCL), 128-148 (ILPMATTWWLLANLMNIATPP), and 169-189 (TIILLGLSMLITASYSLHMFL).

This sequence belongs to the complex I subunit 4 family.

The protein resides in the mitochondrion membrane. It carries out the reaction a ubiquinone + NADH + 5 H(+)(in) = a ubiquinol + NAD(+) + 4 H(+)(out). Core subunit of the mitochondrial membrane respiratory chain NADH dehydrogenase (Complex I) that is believed to belong to the minimal assembly required for catalysis. Complex I functions in the transfer of electrons from NADH to the respiratory chain. The immediate electron acceptor for the enzyme is believed to be ubiquinone. The protein is NADH-ubiquinone oxidoreductase chain 4 (MT-ND4) of Metlapilcoatlus nummifer (Mexican jumping pitviper).